The primary structure comprises 270 residues: Ribosomal RNA small subunit methyltransferase A (270 aa).

S-adenosyl-L-methionine is bound by residues Asn-18, Leu-20, Gly-45, Glu-66, Asp-91, and Asn-112.

This sequence belongs to the class I-like SAM-binding methyltransferase superfamily. rRNA adenine N(6)-methyltransferase family. RsmA subfamily.

Its subcellular location is the cytoplasm. It carries out the reaction adenosine(1518)/adenosine(1519) in 16S rRNA + 4 S-adenosyl-L-methionine = N(6)-dimethyladenosine(1518)/N(6)-dimethyladenosine(1519) in 16S rRNA + 4 S-adenosyl-L-homocysteine + 4 H(+). Its function is as follows. Specifically dimethylates two adjacent adenosines (A1518 and A1519) in the loop of a conserved hairpin near the 3'-end of 16S rRNA in the 30S particle. May play a critical role in biogenesis of 30S subunits. This is Ribosomal RNA small subunit methyltransferase A from Psychromonas ingrahamii (strain DSM 17664 / CCUG 51855 / 37).